Consider the following 523-residue polypeptide: Putative glucosylceramidase 1 (523 aa).

The N-terminal stretch at 1–23 is a signal peptide; sequence MKSRFLLKIFIFLAVFGVDSVRA. N-linked (GlcNAc...) asparagine glycosylation occurs at Asn168. Catalysis depends on Glu358, which acts as the Nucleophile.

Belongs to the glycosyl hydrolase 30 family.

It carries out the reaction a beta-D-glucosylceramide + H2O = an N-acyl-sphingoid base + D-glucose. The enzyme catalyses a beta-D-glucosyl-(1&lt;-&gt;1')-N-acylsphing-4-enine + H2O = an N-acylsphing-4-enine + D-glucose. The catalysed reaction is an N-acyl-1-beta-D-glucosyl-15-methylhexadecasphing-4-enine + H2O = an N-acyl-15-methylhexadecasphing-4-enine + D-glucose. It participates in lipid metabolism; sphingolipid metabolism. In terms of biological role, glucosylceramidase that catalyzes the hydrolysis of glucosylceramides into free ceramides and glucose. C.elegans contains specific sphingoid bases, which are unique or different in structure compared to the sphingoid bases found in other animals. Two examples of these distinctive compounds are: 15-methylhexadecasphinganine and 15-methylhexadecasphing-4-enine. The polypeptide is Putative glucosylceramidase 1 (gba-1) (Caenorhabditis elegans).